The primary structure comprises 387 residues: MSQSKSNILWFLPTHGDGRYLGTATGGREVNFNYLRQIAQAADQLGYFGVLLPTGRSCEDSWIVASSVAPFTERLRYLVAVRPGLQSPSVAARMTATLDRITNGRLLINVVTGGDPVENKGDGIFLGHDERYEVTREFLNVYSDLLGGKAVNVEGKHIRIEDGKLLFPPVQSPRPPLYFGGSSDAGIDVAVDTVDKYLTWGEPPAQVAEKIARVREVANARGRKLSFGIRLHVIVRETNEEAWSAANELIKHVSDDTIARAQRNFARMDSVGQQRMAQLHGGKRDKLEISPNLWAGVGLVRGGAGTALVGDAQTVAARIKEYQDIGIDTFIMSGYPHLEEAYRFAELVFPLLSLDHGSNVTRLHHNSGPFGETVGNDYRPSRLASQS.

Residues His365 to Ser387 form a disordered region.

The protein belongs to the SsuD family.

It carries out the reaction an alkanesulfonate + FMNH2 + O2 = an aldehyde + FMN + sulfite + H2O + 2 H(+). Its function is as follows. Catalyzes the desulfonation of aliphatic sulfonates. This chain is Alkanesulfonate monooxygenase, found in Bradyrhizobium diazoefficiens (strain JCM 10833 / BCRC 13528 / IAM 13628 / NBRC 14792 / USDA 110).